The primary structure comprises 130 residues: MELAKERNGPHQKHHGQCQNHCTSPNTVRQNKTNKLLLVKKKGKLVIWRHIVKKMLHIRLVVLWSHYPEQHGHGTNHYEYTNNSIAKLDAQRVSRRRRKKREAERRDYDTYKLLITLCSLLFVGPLFLKV.

The tract at residues 1-28 is disordered; the sequence is MELAKERNGPHQKHHGQCQNHCTSPNTV. Residues 17–28 show a composition bias toward polar residues; sequence QCQNHCTSPNTV.

This is an uncharacterized protein from Saccharomyces cerevisiae (strain ATCC 204508 / S288c) (Baker's yeast).